Here is a 58-residue protein sequence, read N- to C-terminus: UPF0391 membrane protein OCAR_5266/OCA5_c27040 (58 aa).

The next 2 membrane-spanning stretches (helical) occupy residues 4 to 24 and 30 to 50; these read WVVTFLIIALVAGLLGFGGIA and IAKIVFFIAIVLFAVSAVVGL.

Belongs to the UPF0391 family.

The protein localises to the cell membrane. This chain is UPF0391 membrane protein OCAR_5266/OCA5_c27040, found in Afipia carboxidovorans (strain ATCC 49405 / DSM 1227 / KCTC 32145 / OM5) (Oligotropha carboxidovorans).